A 111-amino-acid chain; its full sequence is MEAKAIAKYVRMSPTKVGVVLDLIRGKNVNEAFAILKYTPRDAAEVISKVLKSAVANAENNHELDANRLFVAEAHVGHGPTLKRFRPMDHGKAFRINKRTSNITLVVKERA.

The protein belongs to the universal ribosomal protein uL22 family. As to quaternary structure, part of the 50S ribosomal subunit.

Functionally, this protein binds specifically to 23S rRNA; its binding is stimulated by other ribosomal proteins, e.g. L4, L17, and L20. It is important during the early stages of 50S assembly. It makes multiple contacts with different domains of the 23S rRNA in the assembled 50S subunit and ribosome. In terms of biological role, the globular domain of the protein is located near the polypeptide exit tunnel on the outside of the subunit, while an extended beta-hairpin is found that lines the wall of the exit tunnel in the center of the 70S ribosome. The protein is Large ribosomal subunit protein uL22 of Clostridium perfringens (strain ATCC 13124 / DSM 756 / JCM 1290 / NCIMB 6125 / NCTC 8237 / Type A).